A 152-amino-acid polypeptide reads, in one-letter code: Nucleoside diphosphate kinase A (152 aa).

Residues Lys12, Phe60, Arg88, and Thr94 each coordinate ATP. Lys100 participates in a covalent cross-link: Glycyl lysine isopeptide (Lys-Gly) (interchain with G-Cter in ubiquitin). ATP is bound by residues Arg105 and Asn115. Residue His118 is the Pros-phosphohistidine intermediate of the active site. Phosphoserine is present on residues Ser120, Ser122, and Ser125.

Belongs to the NDK family. As to quaternary structure, hexamer of two different chains: An and B (A6, A5B, A4B2, A3B3, A2B4, AB5, B6). Interacts with PRUNE1. Component of the SET complex, composed of at least ANP32A, APEX1, HMGB2, NME1, SET and TREX1. Within this complex, interacts directly with SET. Also interacts with TREX1, but only following translocation to the nucleus. It depends on Mg(2+) as a cofactor.

The protein resides in the cytoplasm. It is found in the nucleus. It carries out the reaction a 2'-deoxyribonucleoside 5'-diphosphate + ATP = a 2'-deoxyribonucleoside 5'-triphosphate + ADP. The catalysed reaction is a ribonucleoside 5'-diphosphate + ATP = a ribonucleoside 5'-triphosphate + ADP. Autophosphorylation at His-118 increases serine/threonine protein kinase activity of the enzyme. Interaction with the SET complex inhibits exonuclease activity. Functionally, major role in the synthesis of nucleoside triphosphates other than ATP. The ATP gamma phosphate is transferred to the NDP beta phosphate via a ping-pong mechanism, using a phosphorylated active-site intermediate. Possesses nucleoside-diphosphate kinase, serine/threonine-specific protein kinase, geranyl and farnesyl pyrophosphate kinase, histidine protein kinase and 3'-5' exonuclease activities. Involved in cell proliferation, differentiation and development, signal transduction, G protein-coupled receptor endocytosis, and gene expression. Required for neural development including neural patterning and cell fate determination. During GZMA-mediated cell death, works in concert with TREX1. NME1 nicks one strand of DNA and TREX1 removes bases from the free 3' end to enhance DNA damage and prevent DNA end reannealing and rapid repair. The protein is Nucleoside diphosphate kinase A (NME1) of Canis lupus familiaris (Dog).